A 90-amino-acid chain; its full sequence is Probable Fe(2+)-trafficking protein (90 aa).

Belongs to the Fe(2+)-trafficking protein family.

Its function is as follows. Could be a mediator in iron transactions between iron acquisition and iron-requiring processes, such as synthesis and/or repair of Fe-S clusters in biosynthetic enzymes. This chain is Probable Fe(2+)-trafficking protein, found in Aliivibrio fischeri (strain ATCC 700601 / ES114) (Vibrio fischeri).